A 117-amino-acid polypeptide reads, in one-letter code: Small ribosomal subunit protein bS6 (117 aa).

The segment at 96 to 117 is disordered; that stretch reads HAEGPSVQMQKRDERDNRRERR. A compositionally biased stretch (basic and acidic residues) spans 105–117; sequence QKRDERDNRRERR.

It belongs to the bacterial ribosomal protein bS6 family.

In terms of biological role, binds together with bS18 to 16S ribosomal RNA. The chain is Small ribosomal subunit protein bS6 from Ruegeria sp. (strain TM1040) (Silicibacter sp.).